The following is a 460-amino-acid chain: MNSASAHDLRLLEVDKEKQDPKSPRGALEACLTRCSISSASSSSDDPPPNREAIDNADADTDVQCKNHRASSNWGKFFKLWKRRSMKRLSSFPPLSGAAPPIIKQNKSADPNMNGMVLHDIYDFQSSLQNFSISDIEIATDNFSPENIIGRGGYADVYQGILPEGKLIAVKRLTKGTPDEQTAEFLSELGIIAHVDHPNTAKFIGCCIEGGMHLVFRLSPLGSLGSLLHGPSKYKLTWSRRYNVALGTADGLVYLHEGCQRRIIHRDIKADNILLTEDFQPQICDFGLAKWLPKQLTHHNVSKFEGTFGYFAPEYFMHGIVDEKTDVFAFGVLLLELITGHPALDESQQSLVLWAKPLLERKAIKELVDPSLGDEYNREELIRLTSTASLCIDQSSLLRPRMSQVVELLLGHEDVVMTPREAKIKMMQRTYSEELLDSVEYNSTKYLGDLDRIREVALAS.

The tract at residues Met1–Asn67 is disordered. Residues His7 to Ser23 are compositionally biased toward basic and acidic residues. One can recognise a Protein kinase domain in the interval Phe143–Val415. ATP-binding positions include Ile149–Val157 and Lys171. Residue Asp267 is the Proton acceptor of the active site. Thr307 carries the post-translational modification Phosphothreonine. Phosphotyrosine is present on Tyr315.

Belongs to the protein kinase superfamily. Ser/Thr protein kinase family. As to quaternary structure, interacts with ARAC5 and ARAC10.

The protein localises to the cytoplasm. The enzyme catalyses L-seryl-[protein] + ATP = O-phospho-L-seryl-[protein] + ADP + H(+). It carries out the reaction L-threonyl-[protein] + ATP = O-phospho-L-threonyl-[protein] + ADP + H(+). This Arabidopsis thaliana (Mouse-ear cress) protein is Receptor-like cytosolic serine/threonine-protein kinase RBK2 (RBK2).